Reading from the N-terminus, the 453-residue chain is Cysteine--tRNA ligase (453 aa).

Position 31 (C31) interacts with Zn(2+). Residues 33–43 (PTVYDNPHIGN) carry the 'HIGH' region motif. Positions 213, 238, and 242 each coordinate Zn(2+). Residues 271–275 (KMAKS) carry the 'KMSKS' region motif. An ATP-binding site is contributed by K274.

Belongs to the class-I aminoacyl-tRNA synthetase family. In terms of assembly, monomer. The cofactor is Zn(2+).

The protein localises to the cytoplasm. The enzyme catalyses tRNA(Cys) + L-cysteine + ATP = L-cysteinyl-tRNA(Cys) + AMP + diphosphate. This is Cysteine--tRNA ligase from Pelagibacter ubique (strain HTCC1062).